A 321-amino-acid polypeptide reads, in one-letter code: tRNA(Ile)-lysidine synthase (321 aa).

30–35 (SGGSDS) provides a ligand contact to ATP.

This sequence belongs to the tRNA(Ile)-lysidine synthase family.

Its subcellular location is the cytoplasm. The catalysed reaction is cytidine(34) in tRNA(Ile2) + L-lysine + ATP = lysidine(34) in tRNA(Ile2) + AMP + diphosphate + H(+). Ligates lysine onto the cytidine present at position 34 of the AUA codon-specific tRNA(Ile) that contains the anticodon CAU, in an ATP-dependent manner. Cytidine is converted to lysidine, thus changing the amino acid specificity of the tRNA from methionine to isoleucine. The polypeptide is tRNA(Ile)-lysidine synthase (Chlamydia trachomatis serovar L2 (strain ATCC VR-902B / DSM 19102 / 434/Bu)).